Consider the following 199-residue polypeptide: Ribonuclease P protein subunit p25 (199 aa).

A compositionally biased stretch (basic and acidic residues) spans 1–11; the sequence is MENFRKVRSEE. 2 disordered regions span residues 1-31 and 146-199; these read MENF…FADL and PRQL…DRTA. Position 172 is a phosphoserine (serine 172). Acidic residues predominate over residues 190–199; that stretch reads PEAENEDRTA.

This sequence belongs to the histone-like Alba family. As to quaternary structure, component of nuclear RNase P and RNase MRP ribonucleoproteins. RNase P consists of a catalytic RNA moiety and 10 different protein chains; POP1, POP4, POP5, POP7, RPP14, RPP21, RPP25, RPP30, RPP38 and RPP40. Within the RNase P complex, POP1, POP7 and RPP25 form the 'finger' subcomplex, POP5, RPP14, RPP40 and homodimeric RPP30 form the 'palm' subcomplex, and RPP21, POP4 and RPP38 form the 'wrist' subcomplex. All subunits of the RNase P complex interact with the catalytic RNA. Several subunits of RNase P are also part of the RNase MRP complex. RNase MRP consists of a catalytic RNA moiety and about 8 protein subunits; POP1, POP7, RPP25, RPP30, RPP38, RPP40 and possibly also POP4 and POP5. POP7 forms a heterodimer with RPP25 that binds to the P3 stem loop of the catalytic RNA.

Its subcellular location is the nucleus. The protein resides in the nucleolus. Functionally, component of ribonuclease P, a ribonucleoprotein complex that generates mature tRNA molecules by cleaving their 5'-ends. Also a component of the MRP ribonuclease complex, which cleaves pre-rRNA sequences. This is Ribonuclease P protein subunit p25 (Rpp25) from Rattus norvegicus (Rat).